The following is a 174-amino-acid chain: MAEFHDDDSQFEEKSKSQIKRELHALQDLGERLTTLQPQLLERLPLTDPLRKALLEAPKHKAHIARKRHIQYIGKLMRDQDVDAIVALIDQVDSSTRQYNERFHALERWRDQLIAGGDAALDAFVGEFPECDRQHLRGLVRHAQHEAAHNKPPAAARKVFKYIRELDETKRGLR.

The protein belongs to the DarP family.

It is found in the cytoplasm. In terms of biological role, member of a network of 50S ribosomal subunit biogenesis factors which assembles along the 30S-50S interface, preventing incorrect 23S rRNA structures from forming. Promotes peptidyl transferase center (PTC) maturation. The protein is Dual-action ribosomal maturation protein DarP of Pseudomonas aeruginosa (strain LESB58).